A 426-amino-acid polypeptide reads, in one-letter code: Lipid droplet localized protein (426 aa).

Residues 278 to 298 (FYGYLIGLWIMFLSIFVKYPF) traverse the membrane as a helical segment.

It belongs to the saccharopine dehydrogenase family.

It is found in the membrane. The protein resides in the lipid droplet. The sequence is that of Lipid droplet localized protein from Caenorhabditis elegans.